The chain runs to 2378 residues: Serine/threonine-protein kinase ATM (2378 aa).

One can recognise an FAT domain in the interval 1415-1937 (LSARKRNTMM…LHTILMYDDE (523 aa)). The PI3K/PI4K catalytic domain maps to 2044–2366 (WKDVFTIADG…LLREATSADN (323 aa)). The tract at residues 2050–2056 (IADGIST) is G-loop. The catalytic loop stretch occupies residues 2218-2226 (GLGDRHASN). The activation loop stretch occupies residues 2238 to 2263 (HIDLGMILEYSKRTLPVPEQVPFRIT). One can recognise an FATC domain in the interval 2346 to 2378 (TAQSSNLQIRRLLREATSADNLSRMFCGWMPFL).

It belongs to the PI3/PI4-kinase family. ATM subfamily.

Its subcellular location is the nucleus. It carries out the reaction L-seryl-[protein] + ATP = O-phospho-L-seryl-[protein] + ADP + H(+). The catalysed reaction is L-threonyl-[protein] + ATP = O-phospho-L-threonyl-[protein] + ADP + H(+). Its function is as follows. Serine/threonine protein kinase which activates checkpoint signaling in the presence of DNA double strand breaks (DSBs) and other forms of DNA damage induced by ionizing radiation and other genotoxic stresses such as UV. Plays a role in maintaining genome stability. In Caenorhabditis elegans, this protein is Serine/threonine-protein kinase ATM (atm-1).